The primary structure comprises 135 residues: Phosphoribosyl-AMP cyclohydrolase (135 aa).

D89 provides a ligand contact to Mg(2+). Position 90 (C90) interacts with Zn(2+). The Mg(2+) site is built by D91 and D93. Zn(2+) contacts are provided by C106 and C113.

This sequence belongs to the PRA-CH family. As to quaternary structure, homodimer. The cofactor is Mg(2+). Zn(2+) serves as cofactor.

The protein resides in the cytoplasm. It carries out the reaction 1-(5-phospho-beta-D-ribosyl)-5'-AMP + H2O = 1-(5-phospho-beta-D-ribosyl)-5-[(5-phospho-beta-D-ribosylamino)methylideneamino]imidazole-4-carboxamide. Its pathway is amino-acid biosynthesis; L-histidine biosynthesis; L-histidine from 5-phospho-alpha-D-ribose 1-diphosphate: step 3/9. Its function is as follows. Catalyzes the hydrolysis of the adenine ring of phosphoribosyl-AMP. The polypeptide is Phosphoribosyl-AMP cyclohydrolase (Bifidobacterium adolescentis (strain ATCC 15703 / DSM 20083 / NCTC 11814 / E194a)).